The primary structure comprises 237 residues: Ubiquinone biosynthesis O-methyltransferase (237 aa).

Residues Arg-38, Gly-58, Asp-79, and Met-124 each coordinate S-adenosyl-L-methionine.

This sequence belongs to the methyltransferase superfamily. UbiG/COQ3 family.

The enzyme catalyses a 3-demethylubiquinol + S-adenosyl-L-methionine = a ubiquinol + S-adenosyl-L-homocysteine + H(+). It carries out the reaction a 3-(all-trans-polyprenyl)benzene-1,2-diol + S-adenosyl-L-methionine = a 2-methoxy-6-(all-trans-polyprenyl)phenol + S-adenosyl-L-homocysteine + H(+). Its pathway is cofactor biosynthesis; ubiquinone biosynthesis. Its function is as follows. O-methyltransferase that catalyzes the 2 O-methylation steps in the ubiquinone biosynthetic pathway. The polypeptide is Ubiquinone biosynthesis O-methyltransferase (Acinetobacter baumannii (strain AB307-0294)).